The chain runs to 422 residues: 3-isopropylmalate dehydratase large subunit (422 aa).

Residues C303, C363, and C366 each coordinate [4Fe-4S] cluster.

It belongs to the aconitase/IPM isomerase family. LeuC type 2 subfamily. In terms of assembly, heterodimer of LeuC and LeuD. It depends on [4Fe-4S] cluster as a cofactor.

The enzyme catalyses (2R,3S)-3-isopropylmalate = (2S)-2-isopropylmalate. The protein operates within amino-acid biosynthesis; L-leucine biosynthesis; L-leucine from 3-methyl-2-oxobutanoate: step 2/4. Functionally, catalyzes the isomerization between 2-isopropylmalate and 3-isopropylmalate, via the formation of 2-isopropylmaleate. The polypeptide is 3-isopropylmalate dehydratase large subunit (Wolinella succinogenes (strain ATCC 29543 / DSM 1740 / CCUG 13145 / JCM 31913 / LMG 7466 / NCTC 11488 / FDC 602W) (Vibrio succinogenes)).